Consider the following 312-residue polypeptide: MEKNAGTDDALALSEATARDYLVLLKPRVMSLVVFTGLVGLVVAPGHMNPVLAAISILCVAVGAGASGALNMWYDADIDAVMKRTRNRPIPAGIIAPNQVLAFGLTLSAFSVVTLGLMVNWLSAALLAFTIFFYAVVYTMWLKRSTPQNIVIGGAAGAFPPMIGWAAATGEITWDSVVLFMIIFLWTPPHFWALSLFSANDYEAARIPMMPNVKGELSTRRQALFYSIIMAPVGVLPWVLGFAGPVYGAISTLLGLAFVYYAWRMWVAGSQPEMLAAARKLFRFSLLYLSGLFAVLLVEALVMKALIAFGGF.

A run of 9 helical transmembrane segments spans residues 29–49, 50–70, 90–110, 117–137, 150–170, 177–197, 223–243, 248–268, and 292–312; these read VMSL…GHMN, PVLA…SGAL, IPAG…LSAF, LMVN…YAVV, IVIG…AATG, VVLF…LSLF, ALFY…LGFA, GAIS…MWVA, and LFAV…FGGF.

The protein belongs to the UbiA prenyltransferase family. Protoheme IX farnesyltransferase subfamily.

It is found in the cell inner membrane. The catalysed reaction is heme b + (2E,6E)-farnesyl diphosphate + H2O = Fe(II)-heme o + diphosphate. The protein operates within porphyrin-containing compound metabolism; heme O biosynthesis; heme O from protoheme: step 1/1. Functionally, converts heme B (protoheme IX) to heme O by substitution of the vinyl group on carbon 2 of heme B porphyrin ring with a hydroxyethyl farnesyl side group. The sequence is that of Protoheme IX farnesyltransferase from Brucella anthropi (strain ATCC 49188 / DSM 6882 / CCUG 24695 / JCM 21032 / LMG 3331 / NBRC 15819 / NCTC 12168 / Alc 37) (Ochrobactrum anthropi).